The following is a 395-amino-acid chain: Phosphoglycerate kinase (395 aa).

Substrate is bound by residues 21–23 (DFN), Arg36, 59–62 (HLGR), Arg120, and Arg153. Residues Lys203, Glu325, and 351-354 (GGDS) each bind ATP.

It belongs to the phosphoglycerate kinase family. In terms of assembly, monomer.

It localises to the cytoplasm. It carries out the reaction (2R)-3-phosphoglycerate + ATP = (2R)-3-phospho-glyceroyl phosphate + ADP. It participates in carbohydrate degradation; glycolysis; pyruvate from D-glyceraldehyde 3-phosphate: step 2/5. This is Phosphoglycerate kinase from Roseiflexus castenholzii (strain DSM 13941 / HLO8).